Here is a 688-residue protein sequence, read N- to C-terminus: Elongation factor G (688 aa).

One can recognise a tr-type G domain in the interval 8–282 (INFRNFGIMA…AVVDFLPSPV (275 aa)). GTP-binding positions include 17-24 (AHIDAGKT), 81-85 (DTPGH), and 135-138 (NKMD).

It belongs to the TRAFAC class translation factor GTPase superfamily. Classic translation factor GTPase family. EF-G/EF-2 subfamily.

Its subcellular location is the cytoplasm. In terms of biological role, catalyzes the GTP-dependent ribosomal translocation step during translation elongation. During this step, the ribosome changes from the pre-translocational (PRE) to the post-translocational (POST) state as the newly formed A-site-bound peptidyl-tRNA and P-site-bound deacylated tRNA move to the P and E sites, respectively. Catalyzes the coordinated movement of the two tRNA molecules, the mRNA and conformational changes in the ribosome. This is Elongation factor G (fusA) from Mycoplasma pneumoniae (strain ATCC 29342 / M129 / Subtype 1) (Mycoplasmoides pneumoniae).